Reading from the N-terminus, the 211-residue chain is Ribonuclease HII (211 aa).

The RNase H type-2 domain occupies 2-211 (MLILGVDEAG…TAQRLKASSV (210 aa)). Residues Asp-8, Glu-9, and Asp-106 each contribute to the a divalent metal cation site.

The protein belongs to the RNase HII family. Mn(2+) serves as cofactor. It depends on Mg(2+) as a cofactor.

It is found in the cytoplasm. It catalyses the reaction Endonucleolytic cleavage to 5'-phosphomonoester.. In terms of biological role, endonuclease that specifically degrades the RNA of RNA-DNA hybrids. The polypeptide is Ribonuclease HII (Methanothrix thermoacetophila (strain DSM 6194 / JCM 14653 / NBRC 101360 / PT) (Methanosaeta thermophila)).